Here is a 472-residue protein sequence, read N- to C-terminus: L-fuculokinase (472 aa).

Belongs to the FGGY kinase family. A divalent metal cation serves as cofactor.

It catalyses the reaction L-fuculose + ATP = L-fuculose 1-phosphate + ADP + H(+). Its pathway is carbohydrate degradation; L-fucose degradation; L-lactaldehyde and glycerone phosphate from L-fucose: step 2/3. Functionally, catalyzes the phosphorylation of L-fuculose. Can also phosphorylate, with lower efficiency, D-ribulose, D-xylulose and D-fructose. The chain is L-fuculokinase from Escherichia coli (strain K12).